We begin with the raw amino-acid sequence, 136 residues long: Large ribosomal subunit protein uL22 (136 aa).

This sequence belongs to the universal ribosomal protein uL22 family. As to quaternary structure, part of the 50S ribosomal subunit.

Functionally, this protein binds specifically to 23S rRNA; its binding is stimulated by other ribosomal proteins, e.g. L4, L17, and L20. It is important during the early stages of 50S assembly. It makes multiple contacts with different domains of the 23S rRNA in the assembled 50S subunit and ribosome. The globular domain of the protein is located near the polypeptide exit tunnel on the outside of the subunit, while an extended beta-hairpin is found that lines the wall of the exit tunnel in the center of the 70S ribosome. The polypeptide is Large ribosomal subunit protein uL22 (Bacteroides fragilis (strain YCH46)).